Reading from the N-terminus, the 384-residue chain is Galactokinase (384 aa).

34-37 (EHTD) contributes to the substrate binding site. 123–129 (SSGLSSS) contacts ATP. Ser129 and Glu161 together coordinate Mg(2+). Asp173 (proton acceptor) is an active-site residue. Position 222 (Tyr222) interacts with substrate.

Belongs to the GHMP kinase family. GalK subfamily.

The protein localises to the cytoplasm. It catalyses the reaction alpha-D-galactose + ATP = alpha-D-galactose 1-phosphate + ADP + H(+). It participates in carbohydrate metabolism; galactose metabolism. Catalyzes the transfer of the gamma-phosphate of ATP to D-galactose to form alpha-D-galactose-1-phosphate (Gal-1-P). The protein is Galactokinase of Glaesserella parasuis serovar 5 (strain SH0165) (Haemophilus parasuis).